The following is a 680-amino-acid chain: TBC1 domain family member 23 (680 aa).

One can recognise a Rab-GAP TBC domain in the interval 40–221 (DLSPPQRAKL…ALWDVYLQQA (182 aa)). The Rhodanese domain maps to 330-442 (EGVRFFVVDC…LQQHLADINV (113 aa)).

The protein localises to the golgi apparatus. The protein resides in the trans-Golgi network. It is found in the cytoplasmic vesicle. Its function is as follows. Putative Rab GTPase-activating protein which plays a role in vesicular trafficking. Involved in endosome-to-Golgi trafficking. Acts as a bridging protein by binding simultaneously to golgins, located at the trans-Golgi, and to the WASH complex, located on endosome-derived vesicles. Plays a role in brain development. May act as a general inhibitor of innate immunity signaling. In Danio rerio (Zebrafish), this protein is TBC1 domain family member 23 (tbc1d23).